Here is a 365-residue protein sequence, read N- to C-terminus: Autoinducer 2-binding periplasmic protein LuxP (365 aa).

Positions 1 to 23 (MKKALLFSLISMVGFSPASQATQ) are cleaved as a signal peptide.

This sequence belongs to the bacterial solute-binding protein 2 family.

The protein resides in the periplasm. Functionally, binds to the signaling molecule autoinducer 2 (AI-2), a furanosyl borate diester, (3a-methyl-5,6-dihydrofuro-[2,3d][1,3,2]dioxaborole-2,2,6,6a-tetraol). This complex then interacts with the LuxQ sensor protein. The sequence is that of Autoinducer 2-binding periplasmic protein LuxP (luxP) from Vibrio harveyi (Beneckea harveyi).